Consider the following 211-residue polypeptide: Regulator of G-protein signaling 2 (211 aa).

Disordered regions lie at residues 14 to 33 (RPMDKSAGSGHKSEEKREKM) and 49 to 68 (LQNSSTPGKPKTGKKSKQQA). The necessary for membrane association stretch occupies residues 32–66 (KMKRTLLKDWKTRLSYFLQNSSTPGKPKTGKKSKQ). Residues 79 to 116 (LWSEAFDELLASKYGLAAFRAFLKSEFCEENIEFWLAC) form a necessary to inhibit protein synthesis region. One can recognise an RGS domain in the interval 83–199 (AFDELLASKY…LESEFYQDLC (117 aa)).

In terms of assembly, interacts with GNAQ. Does not interact with GNAI1 and GNAI3. Interacts with EIF2B5. Interacts with PRKG1 (isoform alpha). Phosphorylated by protein kinase C. Phosphorylation by PRKG1 leads to activation of RGS2 activity. In terms of tissue distribution, expressed in acute myelogenous leukemia (AML) and in acute lymphoblastic leukemia (ALL).

It localises to the cell membrane. Its subcellular location is the cytoplasm. The protein resides in the nucleus. It is found in the nucleolus. The protein localises to the mitochondrion. Functionally, regulates G protein-coupled receptor signaling cascades. Inhibits signal transduction by increasing the GTPase activity of G protein alpha subunits, thereby driving them into their inactive GDP-bound form. It is involved in the negative regulation of the angiotensin-activated signaling pathway. Plays a role in the regulation of blood pressure in response to signaling via G protein-coupled receptors and GNAQ. Plays a role in regulating the constriction and relaxation of vascular smooth muscle. Binds EIF2B5 and blocks its activity, thereby inhibiting the translation of mRNA into protein. The chain is Regulator of G-protein signaling 2 (RGS2) from Homo sapiens (Human).